The primary structure comprises 827 residues: MSPSIKKLDCFSPMLCHCKVACTNSTISLMFGCKKYRHQDEDTGSPQEPSSPQFTDDTPGPELVQVAEKSLSQIENVHGFVAHSHISPMKVESLECIFDGPSPVVKEESPPSPSTPLSNPYPQSPVSVQANPPPVVVNTESLDSAPYVNGTEADFEYEEITLERGNSGLGFSIAGGTDNPHIGEDPSIFITKVIPGGAAAQDGRLRVNDVILRVNEVDVRDVTHSKAVEALKEAGSLVRLYVRRRKSASEKVMEIKLIKGPKGLGFSIAGGVGNQHIPGDNSIYVTKIIEGGAAHKDGRLQIGDKLLAVNSSCLEEVTHEHAVTALKNTPDVVYLKVAKPNSVFMNDSFAPPDITNSYSQHMENHISPPSYLSQPLPPVHSGRFSPTPKTTVGDDDVTREPRKVVLHRGTTGLGFNIVGGEDGEGIFISFILAGGPADLCGELRKGDRLVSVNGIDLRGATHEQAAAALKNAGQTVTIVAQYRPEEYSRFEAKIHDLREQMMNSSISSGSGSLRTSQKRSLYVRALFDYDKTKDSGLPSQGLNFKFGDILHVVNASDDEWWQARQVTAQGEVEEMGVIPSKRRVEKKERARLKTVKFNSKSREKGDNPDDMLSKGQSGQEEYVLSYEPVSQQEVNYSRPVIILGPMKDRVNDDLISEFPDKFGSCVPHTTRPKRDYEVDGRDYHFVVSREQMERDIQEHKFIEAGQYNSHLYGTSVQSVREVAEKGKHCILDVSGNAIKRLQVAMLYPIGIFIKPKSVENIMEMNKRLTEEQGRKTYDRAMKLEQEFMEHFTAIVQGDTLEEIYDQVKQIIEEQSGPYIWVQSKEKL.

Disordered stretches follow at residues 38–61 (HQDE…TPGP) and 102–133 (SPVV…ANPP). A compositionally biased stretch (polar residues) spans 44-56 (GSPQEPSSPQFTD). PDZ domains are found at residues 159–246 (EITL…RRRK), 254–341 (EIKL…AKPN), and 403–484 (KVVL…QYRP). The region spanning 518–588 (KRSLYVRALF…PSKRRVEKKE (71 aa)) is the SH3 domain. The tract at residues 595-618 (VKFNSKSREKGDNPDDMLSKGQSG) is disordered. The Guanylate kinase-like domain maps to 637–812 (SRPVIILGPM…IYDQVKQIIE (176 aa)).

It belongs to the MAGUK family.

Its subcellular location is the membrane. Its function is as follows. May play a role in synapse assembly and function. In Danio rerio (Zebrafish), this protein is Discs large homolog 1-like protein (dlg1l).